The chain runs to 166 residues: 2-amino-4-hydroxy-6-hydroxymethyldihydropteridine pyrophosphokinase (166 aa).

Belongs to the HPPK family.

It catalyses the reaction 6-hydroxymethyl-7,8-dihydropterin + ATP = (7,8-dihydropterin-6-yl)methyl diphosphate + AMP + H(+). The protein operates within cofactor biosynthesis; tetrahydrofolate biosynthesis; 2-amino-4-hydroxy-6-hydroxymethyl-7,8-dihydropteridine diphosphate from 7,8-dihydroneopterin triphosphate: step 4/4. Catalyzes the transfer of pyrophosphate from adenosine triphosphate (ATP) to 6-hydroxymethyl-7,8-dihydropterin, an enzymatic step in folate biosynthesis pathway. This chain is 2-amino-4-hydroxy-6-hydroxymethyldihydropteridine pyrophosphokinase (folK), found in Streptococcus pyogenes serotype M6 (strain ATCC BAA-946 / MGAS10394).